The chain runs to 70 residues: DNA-directed RNA polymerase subunit epsilon (70 aa).

Belongs to the RNA polymerase subunit epsilon family. As to quaternary structure, RNAP is composed of a core of 2 alpha, a beta and a beta' subunit. The core is associated with a delta subunit, and at least one of epsilon or omega. When a sigma factor is associated with the core the holoenzyme is formed, which can initiate transcription.

The enzyme catalyses RNA(n) + a ribonucleoside 5'-triphosphate = RNA(n+1) + diphosphate. In terms of biological role, a non-essential component of RNA polymerase (RNAP). The protein is DNA-directed RNA polymerase subunit epsilon of Leuconostoc mesenteroides subsp. mesenteroides (strain ATCC 8293 / DSM 20343 / BCRC 11652 / CCM 1803 / JCM 6124 / NCDO 523 / NBRC 100496 / NCIMB 8023 / NCTC 12954 / NRRL B-1118 / 37Y).